The sequence spans 127 residues: Turripeptide OL172 (127 aa).

The N-terminal stretch at 1-20 (MFSTLIFLTAVTLLMMPSQT) is a signal peptide. Residues 42 to 43 (QR) constitute a propeptide that is removed on maturation. Position 44 is a pyrrolidone carboxylic acid (Gln44). Residues 73 to 75 (QRK) constitute a propeptide that is removed on maturation. Pyrrolidone carboxylic acid is present on Gln76. Positions 104 to 106 (QRK) are excised as a propeptide. Gln107 bears the Pyrrolidone carboxylic acid mark.

The turripeptide OL172 conotoxin-like contains 2 disulfide bonds. As to expression, expressed by the venom duct.

It localises to the secreted. In terms of biological role, acts as a neurotoxin by inhibiting an ion channel. The chain is Turripeptide OL172 from Iotyrris olangoensis (Sea snail).